Here is a 582-residue protein sequence, read N- to C-terminus: Threonine--tRNA ligase (582 aa).

A catalytic region spans residues 185–478 (DHRKLGKELE…LTEQYGGAFP (294 aa)). Zn(2+)-binding residues include C278, H329, and H455.

The protein belongs to the class-II aminoacyl-tRNA synthetase family. In terms of assembly, homodimer. Requires Zn(2+) as cofactor.

The protein localises to the cytoplasm. It carries out the reaction tRNA(Thr) + L-threonine + ATP = L-threonyl-tRNA(Thr) + AMP + diphosphate + H(+). Functionally, catalyzes the attachment of threonine to tRNA(Thr) in a two-step reaction: L-threonine is first activated by ATP to form Thr-AMP and then transferred to the acceptor end of tRNA(Thr). Also edits incorrectly charged L-seryl-tRNA(Thr). This chain is Threonine--tRNA ligase, found in Dehalococcoides mccartyi (strain ATCC BAA-2266 / KCTC 15142 / 195) (Dehalococcoides ethenogenes (strain 195)).